Reading from the N-terminus, the 345-residue chain is Protein D345L (345 aa).

This sequence belongs to the asfivirus D345L family. As to quaternary structure, interacts with IKKA/CHUK and IKBKB.

Its subcellular location is the host cytoplasm. In terms of biological role, plays a role in the negative regulation of host NF-kappa-B signaling pathway. Mechanistically, recruits host IKKA/CHUK and IKBKB to suppress their kinase activity towards NFKBIA. The sequence is that of Protein D345L from African swine fever virus (strain Badajoz 1971 Vero-adapted) (Ba71V).